The sequence spans 501 residues: Aldehyde dehydrogenase family 2 member C4 (501 aa).

245 to 250 (GSTDVG) is a binding site for NAD(+). E268 serves as the catalytic Proton acceptor. C302 serves as the catalytic Nucleophile.

Belongs to the aldehyde dehydrogenase family. In terms of assembly, homotetramer.

It localises to the cytoplasm. Its subcellular location is the cytosol. The enzyme catalyses an aldehyde + NAD(+) + H2O = a carboxylate + NADH + 2 H(+). Functionally, involved in ferulic acid and sinapic acid biosynthesis by oxidation of conyferylaldehyde and sinapaldehyde, respectively. Can oxidize L-lactaldehyde. Possesses activity on acetaldehyde and glycolaldehyde in vitro. This chain is Aldehyde dehydrogenase family 2 member C4 (ALDH2C4), found in Arabidopsis thaliana (Mouse-ear cress).